A 387-amino-acid chain; its full sequence is Sulfopyruvate decarboxylase (387 aa).

It belongs to the TPP enzyme family. It depends on thiamine diphosphate as a cofactor.

It carries out the reaction 3-sulfopyruvate + H(+) = sulfoacetaldehyde + CO2. It functions in the pathway cofactor biosynthesis; coenzyme M biosynthesis. Its function is as follows. Involved in the biosynthesis of the coenzyme M (2-mercaptoethanesulfonic acid). Catalyzes the decarboxylation of sulfopyruvate to sulfoacetaldehyde. Is not able to decarboxylate the analogous compounds 2-oxoglutarate or 2-oxosuberate. In Methanosarcina acetivorans (strain ATCC 35395 / DSM 2834 / JCM 12185 / C2A), this protein is Sulfopyruvate decarboxylase.